The sequence spans 200 residues: NADH-ubiquinone oxidoreductase 21.3 kDa subunit (200 aa).

Transmembrane regions (helical) follow at residues 16 to 36, 48 to 68, and 105 to 125; these read IKSG…MASL, MHVF…GGIY, and FPVI…FAFS.

In terms of assembly, complex I is composed of about 40 different subunits.

The protein resides in the mitochondrion inner membrane. The enzyme catalyses a ubiquinone + NADH + 5 H(+)(in) = a ubiquinol + NAD(+) + 4 H(+)(out). Functionally, transfer of electrons from NADH to the respiratory chain. The immediate electron acceptor for the enzyme is believed to be ubiquinone. The protein is NADH-ubiquinone oxidoreductase 21.3 kDa subunit of Neurospora crassa (strain ATCC 24698 / 74-OR23-1A / CBS 708.71 / DSM 1257 / FGSC 987).